The sequence spans 327 residues: Glycolipid sulfotransferase BCG_1434 (327 aa).

40–45 contributes to the 3'-phosphoadenylyl sulfate binding site; sequence KSGLTW. Residue H97 is the Proton acceptor of the active site. Position 116-124 (116-124) interacts with 3'-phosphoadenylyl sulfate; that stretch reads RDPRDAAVS.

It belongs to the sulfotransferase 1 family.

Functionally, involved in the synthesis of cell wall sulfolipids. This is Glycolipid sulfotransferase BCG_1434 from Mycobacterium bovis (strain BCG / Pasteur 1173P2).